Here is a 366-residue protein sequence, read N- to C-terminus: HTH-type transcriptional regulator MSMEG_6044/MSMEI_5883 (366 aa).

In terms of domain architecture, HTH lacI-type spans 11–66 (ATLASLAAELKVSRTTISNAYNRPDQLSADLRERIFDAAKRLGYPGPDPVARSLRT). Positions 13–32 (LASLAAELKVSRTTISNAYN) form a DNA-binding region, H-T-H motif.

Its function is as follows. Transcriptional regulator that negatively regulates transcription of the mce4 operon, which is involved in cholesterol transport and utilization. Acts by binding to the promoter region of the mce4 operon. The sequence is that of HTH-type transcriptional regulator MSMEG_6044/MSMEI_5883 from Mycolicibacterium smegmatis (strain ATCC 700084 / mc(2)155) (Mycobacterium smegmatis).